A 102-amino-acid polypeptide reads, in one-letter code: SCYNPCLPRSSCGPTPLANSCNEPCLFRQCQDSTVVIEPSPVVVTLPGPILSSFPQNTVVGGSSTSAAVGSILSSQGVPISSGGFNLSGLSGRYSGARCLPC.

At Ser-1 the chain carries N-acetylserine.

Belongs to the avian keratin family. In terms of assembly, the avian keratins (F-ker, S-ker, C-ker and B-ker) are a complex mixture of very similar polypeptides.

The chain is Feather keratin from Dromaius novaehollandiae (Emu).